A 151-amino-acid chain; its full sequence is Transcriptional repressor NrdR (151 aa).

A zinc finger spans residues 3–34 (CPKCGSLNDKVLETRQSKEGVVIKRRRECLNC). In terms of domain architecture, ATP-cone spans 49 to 139 (IEVIKKNNTV…VFDGFEDIKD (91 aa)).

The protein belongs to the NrdR family. Zn(2+) serves as cofactor.

Negatively regulates transcription of bacterial ribonucleotide reductase nrd genes and operons by binding to NrdR-boxes. The polypeptide is Transcriptional repressor NrdR (Sulfurihydrogenibium sp. (strain YO3AOP1)).